The sequence spans 79 residues: Inhibitor of host cell division protein (79 aa).

A coiled-coil region spans residues 15–35 (RQQRSAMLEQEQAEKDKKERR). Residues 37–57 (AGLLFFGTIVVLVAVVAVYIV) traverse the membrane as a helical segment.

The protein resides in the host membrane. Inhibits host cell division leading to filamentation. Does not prevent host cell growth, DNA synthesis or chromosome segregation. Does not seem to be essential for productive bacterial host infection. The chain is Inhibitor of host cell division protein from Bacillus subtilis (Bacteriophage SP01).